The sequence spans 132 residues: Large ribosomal subunit protein bL12 (132 aa).

Residues 100 to 126 are compositionally biased toward basic and acidic residues; sequence ESTPKPVKEGASKEDAEAAKKELEEAG. The disordered stretch occupies residues 100–132; that stretch reads ESTPKPVKEGASKEDAEAAKKELEEAGAKVSIK.

It belongs to the bacterial ribosomal protein bL12 family. As to quaternary structure, homodimer. Part of the ribosomal stalk of the 50S ribosomal subunit. Forms a multimeric L10(L12)X complex, where L10 forms an elongated spine to which 2 to 4 L12 dimers bind in a sequential fashion. Binds GTP-bound translation factors.

Functionally, forms part of the ribosomal stalk which helps the ribosome interact with GTP-bound translation factors. Is thus essential for accurate translation. The chain is Large ribosomal subunit protein bL12 from Thermosynechococcus vestitus (strain NIES-2133 / IAM M-273 / BP-1).